The primary structure comprises 56 residues: Large ribosomal subunit protein bL32 (56 aa).

The disordered stretch occupies residues 1 to 34 (MAVQQNKPSRSKRGMRRAHDALKTSTISVDKTSG).

This sequence belongs to the bacterial ribosomal protein bL32 family.

The polypeptide is Large ribosomal subunit protein bL32 (Baumannia cicadellinicola subsp. Homalodisca coagulata).